Reading from the N-terminus, the 145-residue chain is FAD synthase (145 aa).

Residues 5 to 6, 10 to 13, D92, and Y119 each bind ATP; these read TF and HPGH.

It belongs to the archaeal FAD synthase family. In terms of assembly, homodimer. A divalent metal cation is required as a cofactor.

It catalyses the reaction FMN + ATP + H(+) = FAD + diphosphate. Its pathway is cofactor biosynthesis; FAD biosynthesis; FAD from FMN: step 1/1. Catalyzes the transfer of the AMP portion of ATP to flavin mononucleotide (FMN) to produce flavin adenine dinucleotide (FAD) coenzyme. The protein is FAD synthase of Methanothermus fervidus (strain ATCC 43054 / DSM 2088 / JCM 10308 / V24 S).